Consider the following 421-residue polypeptide: ATP-dependent RNA helicase RhlB (421 aa).

Positions 9 to 37 (QKFSDFALHPKVIEALENKGFHNCTPIQA) match the Q motif motif. Positions 40-219 (LPLTLAGRDV…FEQMNNAEYV (180 aa)) constitute a Helicase ATP-binding domain. Residue 53–60 (AQTGTGKT) participates in ATP binding. Positions 165–168 (DEAD) match the DEAD box motif. Residues 245 to 390 (RLLQTLIEEE…VSKYNPEALM (146 aa)) form the Helicase C-terminal domain. The interval 393 to 421 (LPKPLRLTRSRPGNGPRRTGAPRNRRRSG) is disordered. A compositionally biased stretch (low complexity) spans 403-414 (RPGNGPRRTGAP).

The protein belongs to the DEAD box helicase family. RhlB subfamily. As to quaternary structure, component of the RNA degradosome, which is a multiprotein complex involved in RNA processing and mRNA degradation.

Its subcellular location is the cytoplasm. The enzyme catalyses ATP + H2O = ADP + phosphate + H(+). DEAD-box RNA helicase involved in RNA degradation. Has RNA-dependent ATPase activity and unwinds double-stranded RNA. This Citrobacter koseri (strain ATCC BAA-895 / CDC 4225-83 / SGSC4696) protein is ATP-dependent RNA helicase RhlB.